We begin with the raw amino-acid sequence, 185 residues long: Intraflagellar transport protein 22 homolog (185 aa).

GTP-binding positions include 10–17 (GPCESGKT), 63–67 (DCGGD), and 123–126 (HKPG). Serine 137 is subject to Phosphoserine.

This sequence belongs to the small GTPase superfamily. Rab family. Component of the IFT complex B, at least composed of IFT20, IFT22, IFT25, IFT27, IFT46, IFT52, TRAF3IP1/IFT54, IFT57, IFT74, IFT80, IFT81, and IFT88. Interacts with IFT88. Interacts with CFAP61.

It localises to the cell projection. It is found in the cilium. Functionally, small GTPase-like component of the intraflagellar transport (IFT) complex B. This chain is Intraflagellar transport protein 22 homolog (Ift22), found in Mus musculus (Mouse).